Reading from the N-terminus, the 211-residue chain is ATP-dependent Clp protease proteolytic subunit (211 aa).

The active-site Nucleophile is the serine 106. The active site involves histidine 131.

Belongs to the peptidase S14 family. As to quaternary structure, fourteen ClpP subunits assemble into 2 heptameric rings which stack back to back to give a disk-like structure with a central cavity, resembling the structure of eukaryotic proteasomes.

The protein localises to the cytoplasm. The enzyme catalyses Hydrolysis of proteins to small peptides in the presence of ATP and magnesium. alpha-casein is the usual test substrate. In the absence of ATP, only oligopeptides shorter than five residues are hydrolyzed (such as succinyl-Leu-Tyr-|-NHMec, and Leu-Tyr-Leu-|-Tyr-Trp, in which cleavage of the -Tyr-|-Leu- and -Tyr-|-Trp bonds also occurs).. Its function is as follows. Cleaves peptides in various proteins in a process that requires ATP hydrolysis. Has a chymotrypsin-like activity. Plays a major role in the degradation of misfolded proteins. The protein is ATP-dependent Clp protease proteolytic subunit of Maricaulis maris (strain MCS10) (Caulobacter maris).